A 333-amino-acid polypeptide reads, in one-letter code: Flagellar P-ring protein (333 aa).

The first 22 residues, 1-22 (MRRNILSMFLFITLIIYSSIFA), serve as a signal peptide directing secretion.

Belongs to the FlgI family. As to quaternary structure, the basal body constitutes a major portion of the flagellar organelle and consists of four rings (L,P,S, and M) mounted on a central rod.

The protein resides in the periplasm. Its subcellular location is the bacterial flagellum basal body. Assembles around the rod to form the L-ring and probably protects the motor/basal body from shearing forces during rotation. In Fervidobacterium nodosum (strain ATCC 35602 / DSM 5306 / Rt17-B1), this protein is Flagellar P-ring protein.